We begin with the raw amino-acid sequence, 197 residues long: 3-isopropylmalate dehydratase small subunit (197 aa).

It belongs to the LeuD family. LeuD type 1 subfamily. In terms of assembly, heterodimer of LeuC and LeuD.

It catalyses the reaction (2R,3S)-3-isopropylmalate = (2S)-2-isopropylmalate. It functions in the pathway amino-acid biosynthesis; L-leucine biosynthesis; L-leucine from 3-methyl-2-oxobutanoate: step 2/4. In terms of biological role, catalyzes the isomerization between 2-isopropylmalate and 3-isopropylmalate, via the formation of 2-isopropylmaleate. The chain is 3-isopropylmalate dehydratase small subunit from Shouchella clausii (strain KSM-K16) (Alkalihalobacillus clausii).